The sequence spans 257 residues: UPF0246 protein VCM66_2278 (257 aa).

It belongs to the UPF0246 family.

The protein is UPF0246 protein VCM66_2278 of Vibrio cholerae serotype O1 (strain M66-2).